We begin with the raw amino-acid sequence, 156 residues long: Cytochrome c-type biogenesis protein CcmE (156 aa).

At 1 to 7 (MTRRQRR) the chain is on the cytoplasmic side. A helical; Signal-anchor for type II membrane protein transmembrane segment spans residues 8–28 (LGILLAALVCAGAATALTLNA). Over 29–156 (FRSNLVFFFS…AKESARSASR (128 aa)) the chain is Periplasmic. Heme-binding residues include His-123 and Tyr-127.

Belongs to the CcmE/CycJ family.

Its subcellular location is the cell inner membrane. Its function is as follows. Heme chaperone required for the biogenesis of c-type cytochromes. Transiently binds heme delivered by CcmC and transfers the heme to apo-cytochromes in a process facilitated by CcmF and CcmH. In Ralstonia pickettii (strain 12J), this protein is Cytochrome c-type biogenesis protein CcmE.